The sequence spans 307 residues: Putative F-box/LRR-repeat protein 22 (307 aa).

Polar residues predominate over residues Met1–Leu15. The tract at residues Met1–Asn26 is disordered. The F-box domain maps to Pro24–Ile71. 5 LRR repeats span residues Trp108–Gly133, Tyr158–Gly183, Trp185–Leu210, Ser212–Gln237, and Phe244–Tyr270. Residues Ile279 to Asn289 show a composition bias toward acidic residues. Positions Ile279–Phe307 are disordered.

The sequence is that of Putative F-box/LRR-repeat protein 22 (FBL22) from Arabidopsis thaliana (Mouse-ear cress).